The sequence spans 352 residues: Holliday junction branch migration complex subunit RuvB (352 aa).

Residues 1 to 26 (MIETDKLRAAAPERLISPQPADRQED) form a disordered region. The interval 4–193 (TDKLRAAAPE…FGIVSRLEFY (190 aa)) is large ATPase domain (RuvB-L). Residues L32, R33, G74, K77, T78, T79, 140-142 (EDF), R183, Y193, and R230 each bind ATP. A Mg(2+)-binding site is contributed by T78. Positions 194 to 264 (TPDELGFIVS…VADAALRMLD (71 aa)) are small ATPAse domain (RuvB-S). A head domain (RuvB-H) region spans residues 267 to 352 (SLGLDLMDRK…RPGGTDLFGG (86 aa)). Positions 322 and 327 each coordinate DNA.

Belongs to the RuvB family. In terms of assembly, homohexamer. Forms an RuvA(8)-RuvB(12)-Holliday junction (HJ) complex. HJ DNA is sandwiched between 2 RuvA tetramers; dsDNA enters through RuvA and exits via RuvB. An RuvB hexamer assembles on each DNA strand where it exits the tetramer. Each RuvB hexamer is contacted by two RuvA subunits (via domain III) on 2 adjacent RuvB subunits; this complex drives branch migration. In the full resolvosome a probable DNA-RuvA(4)-RuvB(12)-RuvC(2) complex forms which resolves the HJ.

The protein localises to the cytoplasm. The enzyme catalyses ATP + H2O = ADP + phosphate + H(+). Its function is as follows. The RuvA-RuvB-RuvC complex processes Holliday junction (HJ) DNA during genetic recombination and DNA repair, while the RuvA-RuvB complex plays an important role in the rescue of blocked DNA replication forks via replication fork reversal (RFR). RuvA specifically binds to HJ cruciform DNA, conferring on it an open structure. The RuvB hexamer acts as an ATP-dependent pump, pulling dsDNA into and through the RuvAB complex. RuvB forms 2 homohexamers on either side of HJ DNA bound by 1 or 2 RuvA tetramers; 4 subunits per hexamer contact DNA at a time. Coordinated motions by a converter formed by DNA-disengaged RuvB subunits stimulates ATP hydrolysis and nucleotide exchange. Immobilization of the converter enables RuvB to convert the ATP-contained energy into a lever motion, pulling 2 nucleotides of DNA out of the RuvA tetramer per ATP hydrolyzed, thus driving DNA branch migration. The RuvB motors rotate together with the DNA substrate, which together with the progressing nucleotide cycle form the mechanistic basis for DNA recombination by continuous HJ branch migration. Branch migration allows RuvC to scan DNA until it finds its consensus sequence, where it cleaves and resolves cruciform DNA. The polypeptide is Holliday junction branch migration complex subunit RuvB (Azoarcus sp. (strain BH72)).